The sequence spans 122 residues: Large ribosomal subunit protein uL14 (122 aa).

The protein belongs to the universal ribosomal protein uL14 family. Part of the 50S ribosomal subunit. Forms a cluster with proteins L3 and L19. In the 70S ribosome, L14 and L19 interact and together make contacts with the 16S rRNA in bridges B5 and B8.

In terms of biological role, binds to 23S rRNA. Forms part of two intersubunit bridges in the 70S ribosome. The protein is Large ribosomal subunit protein uL14 of Laribacter hongkongensis (strain HLHK9).